The following is a 79-amino-acid chain: D-alanyl carrier protein (79 aa).

A Carrier domain is found at 1-77 (MSIEETVIEL…KIVQGVEELQ (77 aa)). Ser-35 bears the O-(pantetheine 4'-phosphoryl)serine mark.

The protein belongs to the DltC family. Post-translationally, 4'-phosphopantetheine is transferred from CoA to a specific serine of apo-DCP.

It is found in the cytoplasm. Its pathway is cell wall biogenesis; lipoteichoic acid biosynthesis. In terms of biological role, carrier protein involved in the D-alanylation of lipoteichoic acid (LTA). The loading of thioester-linked D-alanine onto DltC is catalyzed by D-alanine--D-alanyl carrier protein ligase DltA. The DltC-carried D-alanyl group is further transferred to cell membrane phosphatidylglycerol (PG) by forming an ester bond, probably catalyzed by DltD. D-alanylation of LTA plays an important role in modulating the properties of the cell wall in Gram-positive bacteria, influencing the net charge of the cell wall. The chain is D-alanyl carrier protein from Streptococcus pyogenes serotype M1.